Here is a 440-residue protein sequence, read N- to C-terminus: Serine/threonine-protein kinase 2 (440 aa).

The Protein kinase domain occupies 85–440 (NDDFYHISTG…FSNWINGESC (356 aa)). Residues 91–99 (ISTGGYGIV) and K115 each bind ATP. The active-site Proton acceptor is the D306.

The protein belongs to the protein kinase superfamily. Ser/Thr protein kinase family. Poxviruses subfamily. Phosphorylated in vivo. Autophosphorylated in vitro.

It localises to the host endoplasmic reticulum. The protein localises to the host endoplasmic reticulum-Golgi intermediate compartment. It carries out the reaction L-seryl-[protein] + ATP = O-phospho-L-seryl-[protein] + ADP + H(+). It catalyses the reaction L-threonyl-[protein] + ATP = O-phospho-L-threonyl-[protein] + ADP + H(+). Essential serine-protein kinase involved in the early stage of virion morphogenesis. This Sus scrofa (Pig) protein is Serine/threonine-protein kinase 2 (OPG054).